Consider the following 940-residue polypeptide: Acetyl-coenzyme A synthetase (940 aa).

An N-terminal signal peptide occupies residues 1–33 (MCCAIWSASRAPACSASQLSSSHAVRPSVVPDA). The interval 1–289 (MCCAIWSASR…VQRSVTRLTA (289 aa)) is unknown. Disordered stretches follow at residues 70–127 (TARA…RPRC), 157–202 (VAPP…ADSA), and 224–274 (ASSQ…QQTC). Composition is skewed to polar residues over residues 72–95 (RATT…TAAS) and 107–120 (SSIS…TSGS). Composition is skewed to low complexity over residues 184-202 (TAPP…ADSA) and 224-245 (ASSQ…SGRS). Residues 258–274 (SSPTVQRNQTTVHQQTC) show a composition bias toward polar residues. The segment at 290–940 (MSNPSHAEVP…SVFEAIRASK (651 aa)) is acetyl-coenzyme A synthetase. CoA is bound by residues 480 to 483 (RRGK) and T599. ATP is bound by residues 675–677 (GEP), 699–704 (DTWWQT), D796, and R811. S819 contributes to the CoA binding site. R822 provides a ligand contact to ATP. Residues V833, H835, and V838 each coordinate Mg(2+). Position 906 is an N6-acetyllysine (K906).

It belongs to the ATP-dependent AMP-binding enzyme family. Mg(2+) serves as cofactor. Acetylated on Lys-906 by Pat in the presence of acetyl-CoA as an acetyl donor and ATP. Acetylation results in the inactivation of the enzyme. Deacetylation by the SIR2-homolog deacetylase CobB is required to activate the enzyme.

It catalyses the reaction acetate + ATP + CoA = acetyl-CoA + AMP + diphosphate. In terms of biological role, catalyzes the conversion of acetate into acetyl-CoA (AcCoA), an essential intermediate at the junction of anabolic and catabolic pathways. AcsA undergoes a two-step reaction. In the first half reaction, AcsA combines acetate with ATP to form acetyl-adenylate (AcAMP) intermediate. In the second half reaction, it can then transfer the acetyl group from AcAMP to the sulfhydryl group of CoA, forming the product AcCoA. This Mycolicibacterium smegmatis (strain ATCC 700084 / mc(2)155) (Mycobacterium smegmatis) protein is Acetyl-coenzyme A synthetase (acsA).